Reading from the N-terminus, the 490-residue chain is MEKWWFNSMLYKGKLEYRCGLSKSIDRFGNPIEKTSVSEDPVRNDTDKKIHSWSESSSYSNATHFVGVRDVRNFISDDTFLVRDSNRNIYSIYFDITNQIFEIDNDPSLLSERESSFFSYRTYAYLKNGSKNDDPPCDRSMYDTKYSWNNHITSCINSYLGSQICIESSILSSSDNSSDSYISSYIYGESRNSNERGSSSIRTSRNGIDFTRRENSTDFDLTQKYRHLWVQCENCYGLNYKKLLKSKMNICDQCGYHLKMSSSDRIELSIDPGTWDPMDEDMVSLDPIEFHSEEEPYKDRIDSYQRKTGLTDAVQTGTGRLNGIPIAIGVMDFQFMGGSMGSVVGEKITRLIEYATNQFLPLILVCASGGARMQEGSLSLMQMAKISAALYDYQSHKKLFYVSILTSPTTGGVTASFGMLGDIIIAEPNAYIAFAGKRVIEQTLNKIVPEGSQAAEYLFHKGLFDPIVPRNPLKGVLSELFKLHAFFPLN.

In terms of domain architecture, CoA carboxyltransferase N-terminal spans 228–490; it reads LWVQCENCYG…FKLHAFFPLN (263 aa). C232, C235, C251, and C254 together coordinate Zn(2+). Residues 232 to 254 form a C4-type zinc finger; the sequence is CENCYGLNYKKLLKSKMNICDQC.

It belongs to the AccD/PCCB family. As to quaternary structure, acetyl-CoA carboxylase is a heterohexamer composed of biotin carboxyl carrier protein, biotin carboxylase and 2 subunits each of ACCase subunit alpha and ACCase plastid-coded subunit beta (accD). It depends on Zn(2+) as a cofactor.

It is found in the plastid. The protein localises to the chloroplast stroma. The enzyme catalyses N(6)-carboxybiotinyl-L-lysyl-[protein] + acetyl-CoA = N(6)-biotinyl-L-lysyl-[protein] + malonyl-CoA. It functions in the pathway lipid metabolism; malonyl-CoA biosynthesis; malonyl-CoA from acetyl-CoA: step 1/1. Functionally, component of the acetyl coenzyme A carboxylase (ACC) complex. Biotin carboxylase (BC) catalyzes the carboxylation of biotin on its carrier protein (BCCP) and then the CO(2) group is transferred by the transcarboxylase to acetyl-CoA to form malonyl-CoA. This is Acetyl-coenzyme A carboxylase carboxyl transferase subunit beta, chloroplastic from Eucalyptus globulus subsp. globulus (Tasmanian blue gum).